The following is a 914-amino-acid chain: MGVRISQIADELGYTSQEVVAKAQEMGYKRIKTGSNSVSDEEASAIYDYIQTGVLPKKTEKKQTAKKSVKKDTVKKDTVKKTAVKKDDSKAAKKTKPIAKKSAPKTEKKVEKKVESKISKPDNEILEAKPEISKPEIKAEPKKEEIEQKQEAEPKIEVMPEKKSKIKSAFARGETLASESLKKRRGLVIVKKKKDLQTTETQKIEAPKTQKINLGLDAIFSNADANLKKKEKKKEKKQVQSKKVDTTKIDLTSDRELADIRIDDDEDMVVLPDLTLKPIQVEQKTKTKDQPNIYKVSQNKVYGNDGSIARGARKKHKKAVKNSDNEIIKSIEIPKEIRLYEFAEKIKKQPSEIISKLFALGLMTTKNDFLDEDAIEILGAEFDIDIKIVDENAKLNYVKVYDEQNLDDKNAVERVPVITIMGHVDHGKTSLLDYIRNSRIARGEAGGITQHVGAYMVEKNGRKITFIDTPGHEAFTSMRARGAEVTDIVIIVVAADDGVKPQTKEAINHAKAAKVPIIIAINKMDKPTANPDMVKSGLAELDIIPVEWGGKYEFVEISAKTGKGIEDLLEIVLLQADLLELKASLNVPAKATIIESSLQKGRGPVATIIVQNGTLRVGDTVVAGVAYGKVRVINDDKGKKLKDIKPGECGVIVGLSEVPEAGETLISVTSDKEAREYAKKIYEHNRQKELSKSTKVTIDELSAKIAEGEIKSLPVIVKADVVGSLEAVKSSLEKLRNDEVRVDIIHSGVGGITQNDVGLASASENCIILGFNIRPTGEVKELAKERGVNIKTYNVIYNLIDDVKAVLGGLMSPIISEIEIGQAEIRQVINVPKIGQIAGCMVTDGSIQRGAKIRVIREGVIKFEGNVSSLKRFKDDVKEVAKGFECGVGIEGYNDMQVGDFIESFKEKEEIASL.

The segment at 58 to 160 (KTEKKQTAKK…EAEPKIEVMP (103 aa)) is disordered. The segment covering 70–91 (KKDTVKKDTVKKTAVKKDDSKA) has biased composition (basic and acidic residues). Residues 92–103 (AKKTKPIAKKSA) show a composition bias toward basic residues. Residues 104–160 (PKTEKKVEKKVESKISKPDNEILEAKPEISKPEIKAEPKKEEIEQKQEAEPKIEVMP) show a composition bias toward basic and acidic residues. Residues 413–582 (ERVPVITIMG…LLQADLLELK (170 aa)) form the tr-type G domain. Positions 422 to 429 (GHVDHGKT) are G1. 422–429 (GHVDHGKT) contacts GTP. Residues 447-451 (GITQH) form a G2 region. Residues 468-471 (DTPG) are G3. Residues 468 to 472 (DTPGH) and 522 to 525 (NKMD) each bind GTP. The tract at residues 522 to 525 (NKMD) is G4. Positions 558 to 560 (SAK) are G5.

The protein belongs to the TRAFAC class translation factor GTPase superfamily. Classic translation factor GTPase family. IF-2 subfamily.

Its subcellular location is the cytoplasm. One of the essential components for the initiation of protein synthesis. Protects formylmethionyl-tRNA from spontaneous hydrolysis and promotes its binding to the 30S ribosomal subunits. Also involved in the hydrolysis of GTP during the formation of the 70S ribosomal complex. The chain is Translation initiation factor IF-2 from Campylobacter hominis (strain ATCC BAA-381 / DSM 21671 / CCUG 45161 / LMG 19568 / NCTC 13146 / CH001A).